Consider the following 305-residue polypeptide: tRNA pseudouridine synthase B (305 aa).

Aspartate 48 (nucleophile) is an active-site residue.

This sequence belongs to the pseudouridine synthase TruB family. Type 1 subfamily.

The enzyme catalyses uridine(55) in tRNA = pseudouridine(55) in tRNA. In terms of biological role, responsible for synthesis of pseudouridine from uracil-55 in the psi GC loop of transfer RNAs. This is tRNA pseudouridine synthase B from Pseudomonas putida (strain ATCC 700007 / DSM 6899 / JCM 31910 / BCRC 17059 / LMG 24140 / F1).